Consider the following 561-residue polypeptide: GPI mannosyltransferase 3 (561 aa).

A run of 8 helical transmembrane segments spans residues 3–25, 64–84, 110–130, 155–175, 195–215, 246–266, 275–295, and 328–348; these read LIYV…QTYY, IAGL…LLVV, WALF…RTLA, LWPA…WLPL, FVLI…YWHG, FSVG…FGVM, YPVS…LSAV, and TMLW…AWYL. Residues Asn398 and Asn456 are each glycosylated (N-linked (GlcNAc...) asparagine). Residues 525–546 form a disordered region; that stretch reads ENAFNRGPDSGQHEPDVHDHPP. A compositionally biased stretch (basic and acidic residues) spans 535-546; that stretch reads GQHEPDVHDHPP.

It belongs to the glycosyltransferase 22 family. PIGB subfamily.

The protein localises to the endoplasmic reticulum membrane. It functions in the pathway glycolipid biosynthesis; glycosylphosphatidylinositol-anchor biosynthesis. Functionally, mannosyltransferase involved in glycosylphosphatidylinositol-anchor biosynthesis. Transfers the third alpha-1,2-mannose to Man2-GlcN-acyl-PI during GPI precursor assembly. The sequence is that of GPI mannosyltransferase 3 from Drosophila melanogaster (Fruit fly).